Reading from the N-terminus, the 156-residue chain is ATP synthase subunit b (156 aa).

A helical transmembrane segment spans residues 12-32 (VAFLIFVLFCMKYVWPPVITA).

The protein belongs to the ATPase B chain family. In terms of assembly, F-type ATPases have 2 components, F(1) - the catalytic core - and F(0) - the membrane proton channel. F(1) has five subunits: alpha(3), beta(3), gamma(1), delta(1), epsilon(1). F(0) has three main subunits: a(1), b(2) and c(10-14). The alpha and beta chains form an alternating ring which encloses part of the gamma chain. F(1) is attached to F(0) by a central stalk formed by the gamma and epsilon chains, while a peripheral stalk is formed by the delta and b chains.

Its subcellular location is the cell inner membrane. F(1)F(0) ATP synthase produces ATP from ADP in the presence of a proton or sodium gradient. F-type ATPases consist of two structural domains, F(1) containing the extramembraneous catalytic core and F(0) containing the membrane proton channel, linked together by a central stalk and a peripheral stalk. During catalysis, ATP synthesis in the catalytic domain of F(1) is coupled via a rotary mechanism of the central stalk subunits to proton translocation. In terms of biological role, component of the F(0) channel, it forms part of the peripheral stalk, linking F(1) to F(0). The polypeptide is ATP synthase subunit b (Pseudomonas putida (strain ATCC 47054 / DSM 6125 / CFBP 8728 / NCIMB 11950 / KT2440)).